A 412-amino-acid chain; its full sequence is Eukaryotic initiation factor 4A-2 (412 aa).

Alanine 2 is modified (N-acetylalanine). The Q motif motif lies at 39-67 (ESFDAMGLQENLLRGIYAYGFEKPSAIQQ). One can recognise a Helicase ATP-binding domain in the interval 70–240 (IVPFCKGLDV…RKFMSKPVRI (171 aa)). 83–90 (AQSGTGKT) is a binding site for ATP. Threonine 145 is modified (phosphothreonine). A DEAD box motif is present at residues 188-191 (DEAD). The Helicase C-terminal domain maps to 251-412 (GIKQFYVNVE…ELPSNVADLL (162 aa)).

This sequence belongs to the DEAD box helicase family. eIF4A subfamily. As to quaternary structure, eIF4F is a multi-subunit complex, the composition of which varies with external and internal environmental conditions. It is composed of at least EIF4A, EIF4E and EIF4G. As to expression, ubiquitous. Preferentially expressed in flowers, young leaves and roots.

The protein localises to the cytoplasm. It carries out the reaction ATP + H2O = ADP + phosphate + H(+). In terms of biological role, ATP-dependent RNA helicase which is a subunit of the eIF4F complex involved in cap recognition and is required for mRNA binding to ribosome. In the current model of translation initiation, eIF4A unwinds RNA secondary structures in the 5'-UTR of mRNAs which is necessary to allow efficient binding of the small ribosomal subunit, and subsequent scanning for the initiator codon. This Arabidopsis thaliana (Mouse-ear cress) protein is Eukaryotic initiation factor 4A-2 (TIF4A-2).